The primary structure comprises 1170 residues: RNA-binding protein 33 (1170 aa).

Disordered regions lie at residues 1-152 (MAAA…EGHE) and 199-221 (KDIK…LRFK). N-acetylalanine is present on Ala-2. The span at 20–36 (QFDKPGAERSWRRRAAD) shows a compositional bias: basic and acidic residues. The span at 37–49 (EDWDSELEDDLLG) shows a compositional bias: acidic residues. Phosphoserine is present on Ser-41. Residues 82–108 (FSSQGVTISLNATSGMVTSFELSDNTN) are compositionally biased toward polar residues. 2 stretches are compositionally biased toward acidic residues: residues 112–126 (GEQE…GEDE) and 203–214 (EESDEEEEDDEE). 2 positions are modified to phosphoserine: Ser-205 and Ser-233. Disordered regions lie at residues 259-708 (FEER…NSNL), 721-784 (MSSS…PDED), 833-863 (QLYA…PFPG), and 942-1050 (AVPQ…VPPG). Basic residues predominate over residues 267–278 (KQGRYSSRRGGR). A compositionally biased stretch (basic and acidic residues) spans 289 to 306 (GDQRRESTERGRMKDHRP). Over residues 311 to 329 (TQPPVVPQAPPPPPPPPQQ) the composition is skewed to pro residues. 3 stretches are compositionally biased toward low complexity: residues 335 to 348 (LFQP…LPVQ), 357 to 372 (QGMH…RMMM), and 394 to 403 (TVVTPVQVPL). Positions 419–433 (FPGPPEFPQHTPGPV) are enriched in pro residues. Asymmetric dimethylarginine is present on Arg-470. Pro residues-rich tracts occupy residues 481 to 490 (SPPPPPPPPT), 554 to 568 (FIPP…PGQP), and 582 to 630 (LHPP…PQHP). A compositionally biased stretch (basic residues) spans 632–642 (QHQHHHHHHHL). Composition is skewed to polar residues over residues 662–708 (QTAQ…NSNL) and 721–732 (MSSSRCSATPSA). 2 positions are modified to phosphoserine: Ser-741 and Ser-765. Positions 789–835 (LYRLKIEEQKRLREEILKQKELRRQQQAGARKKELLERLAQQQQQLY) form a coiled coil. Ser-951 is modified (phosphoserine). A Glycyl lysine isopeptide (Lys-Gly) (interchain with G-Cter in SUMO2) cross-link involves residue Lys-960. 2 positions are modified to phosphoserine: Ser-973 and Ser-991. At Arg-1028 the chain carries Asymmetric dimethylarginine; alternate. Arg-1028 is subject to Omega-N-methylarginine; alternate. The RRM domain maps to 1098–1170 (CVVSVEGLSS…SHINVALIVE (73 aa)).

In terms of assembly, associates with the NXF1-NXT1 RNA export complex. Interacts with ALKBH5; facilitating ALKBH5 recruitment to m6A-containing transcripts. Interacts with SENP1; promoting ALKBH5 deSUMOylation and subsequent activation.

Its subcellular location is the nucleus. It is found in the cytoplasm. In terms of biological role, RNA reader protein, which recognizes and binds specific RNAs, thereby regulating RNA metabolic processes, such as mRNA export, mRNA stability and/or translation. Binds a subset of intronless RNAs containing GC-rich elements, such as NORAD, and promotes their nuclear export by recruiting target RNAs to components of the NXF1-NXT1 RNA export machinery. Specifically recognizes and binds N6-methyladenosine (m6A)-containing mRNAs, promoting their demethylation by ALKBH5. Acts as an molecular adapter, which (1) promotes ALKBH5 recruitment to m6A-containing transcripts and (2) activates ALKBH5 demethylase activity by recruiting SENP1, leading to ALKBH5 deSUMOylation and subsequent activation. In Homo sapiens (Human), this protein is RNA-binding protein 33.